Consider the following 174-residue polypeptide: MIDAEGFRANVGIVICNSLGQVFWARRYGQHSWQFPQGGIDEGETAEQTMYRELYEEVGLKPEHVKILAVTKNWLRYKLPKRLIRQGSAPVCIGQKQKWFLLQLTCKEQDVDLLQSGHPEFDDWRWVSFWYPVRNVVSFKREVYRRAMKEFAPTAMALSSKPAQGQRSKRRRKN.

Residues 6–149 (GFRANVGIVI…KREVYRRAMK (144 aa)) enclose the Nudix hydrolase domain. A Nudix box motif is present at residues 38–59 (GGIDEGETAEQTMYRELYEEVG).

The protein belongs to the Nudix hydrolase family. RppH subfamily. A divalent metal cation is required as a cofactor.

Its function is as follows. Accelerates the degradation of transcripts by removing pyrophosphate from the 5'-end of triphosphorylated RNA, leading to a more labile monophosphorylated state that can stimulate subsequent ribonuclease cleavage. In Pseudoalteromonas atlantica (strain T6c / ATCC BAA-1087), this protein is RNA pyrophosphohydrolase.